Consider the following 58-residue polypeptide: Isocitrate lyase (58 aa).

The protein belongs to the isocitrate lyase/PEP mutase superfamily. Isocitrate lyase family. As to quaternary structure, homotetramer. Requires Mg(2+) as cofactor.

The protein resides in the glyoxysome. The catalysed reaction is D-threo-isocitrate = glyoxylate + succinate. The protein operates within carbohydrate metabolism; glyoxylate cycle; (S)-malate from isocitrate: step 1/2. Involved in storage lipid mobilization during the growth of higher plant seedling. The protein is Isocitrate lyase of Helianthus annuus (Common sunflower).